The following is a 508-amino-acid chain: Erythropoietin receptor (508 aa).

Positions 1–24 (MNHLWTHLWPGVGSLCLLLAGAAW) are cleaved as a signal peptide. The Extracellular segment spans residues 25 to 250 (ASLPKPLDPK…SLLTASDLDP (226 aa)). A disulfide bridge connects residues Cys-52 and Cys-62. Asn-76 is a glycosylation site (N-linked (GlcNAc...) asparagine). The cysteines at positions 91 and 107 are disulfide-linked. A Fibronectin type-III domain is found at 148-247 (PPAGLLARRA…EPASLLTASD (100 aa)). N-linked (GlcNAc...) asparagine glycosylation is present at Asn-184. A WSXWS motif motif is present at residues 233–237 (WSAWS). The helical transmembrane segment at 251–273 (LILTLSLILVLILLLLAVLALLS) threads the bilayer. Residues 274–508 (HRRTLKQKIW…PSPPGYVACS (235 aa)) lie on the Cytoplasmic side of the membrane. Residue Lys-281 forms a Glycyl lysine isopeptide (Lys-Gly) (interchain with G-Cter in ubiquitin) linkage. Residues 282 to 290 (IWPGIPSPE) carry the Box 1 motif motif. Residues Tyr-368 and Tyr-426 each carry the phosphotyrosine; by JAK2 modification. The ITIM motif signature appears at 452 to 457 (IKYLYL). Lys-453 is covalently cross-linked (Glycyl lysine isopeptide (Lys-Gly) (interchain with G-Cter in ubiquitin)). Residues Tyr-454, Tyr-456, Tyr-468, Tyr-489, and Tyr-504 each carry the phosphotyrosine; by JAK2 modification. A disordered region spans residues 467 to 508 (DYSSGGSQGAQGDSLNSPFLNPYENSLIPAPEPSPPGYVACS).

Belongs to the type I cytokine receptor family. Type 1 subfamily. In terms of assembly, forms homodimers on EPO stimulation. The tyrosine-phosphorylated form interacts with several SH2 domain-containing proteins including LYN, the adapter protein SH2B2, PTPN6, PTPN11, JAK2, PI3 kinases, STAT5A/B, SOCS3, CRKL. Interacts with INPP5D/SHIP1. SH2B2 binding inhibits the JAK-STAT signaling. Interacts with RHEX; this interaction occurs in a erythropoietin (EPO)-dependent manner. Interacts with ATXN2L. Post-translationally, on EPO stimulation, phosphorylated on C-terminal tyrosine residues by JAK2. The phosphotyrosine motifs are also recruitment sites for several SH2-containing proteins and adapter proteins which mediate cell proliferation. Phosphorylation on Tyr-454 is required for PTPN6 interaction, Tyr-426 for PTPN11. Tyr-426 is also required for SOCS3 binding, but Tyr-454/Tyr-456 motif is the preferred binding site. Ubiquitinated by the ECS(SOCS2) complex following ligand-binding and phosphorylation by JAK2, leading to its degradation by the proteasome. Regulation by the ECS(SOCS2) complex acts as a negative feedback loop of erythropoietin-mediated signaling pathway. Ubiquitination at Lys-281 mediates receptor internalization, whereas ubiquitination at Lys-453 promotes trafficking of activated receptors to the lysosomes for degradation. Ubiquitinated by NOSIP; appears to be either multi-monoubiquitinated or polyubiquitinated. Ubiquitination mediates proliferation and survival of EPO-dependent cells.

It is found in the cell membrane. Its function is as follows. Receptor for erythropoietin, which mediates erythropoietin-induced erythroblast proliferation and differentiation. Upon EPO stimulation, EPOR dimerizes triggering the JAK2/STAT5 signaling cascade. In some cell types, can also activate STAT1 and STAT3. May also activate the LYN tyrosine kinase. Isoform EPOR-T acts as a dominant-negative receptor of EPOR-mediated signaling. The chain is Erythropoietin receptor (EPOR) from Canis lupus familiaris (Dog).